The sequence spans 692 residues: Threonine--tRNA ligase (692 aa).

The tract at residues 1-20 (MSAPAQPAPGVDGGDPSQAR) is disordered. One can recognise a TGS domain in the interval 1–74 (MSAPAQPAPG…DVDTDITPVA (74 aa)). Residues 269–575 (DHRKLGVELD…LTEHYAGAFP (307 aa)) form a catalytic region. Zn(2+)-binding residues include cysteine 374, histidine 425, and histidine 552.

The protein belongs to the class-II aminoacyl-tRNA synthetase family. In terms of assembly, homodimer. Zn(2+) is required as a cofactor.

It is found in the cytoplasm. It catalyses the reaction tRNA(Thr) + L-threonine + ATP = L-threonyl-tRNA(Thr) + AMP + diphosphate + H(+). Functionally, catalyzes the attachment of threonine to tRNA(Thr) in a two-step reaction: L-threonine is first activated by ATP to form Thr-AMP and then transferred to the acceptor end of tRNA(Thr). Also edits incorrectly charged L-seryl-tRNA(Thr). The sequence is that of Threonine--tRNA ligase from Mycobacterium tuberculosis (strain CDC 1551 / Oshkosh).